The chain runs to 587 residues: Trans-activating transcriptional regulatory protein (587 aa).

It belongs to the nucleopolyhedrovirus IE-1 protein family.

Functionally, regulatory transcriptional protein, which trans-activates gene expression from early baculovirus promoters. Can also trans-activate its own promoter, suggesting that it is autoregulated during normal infection of insect cells. The chain is Trans-activating transcriptional regulatory protein (IE1) from Bombyx mori nuclear polyhedrosis virus (BmNPV).